An 83-amino-acid chain; its full sequence is Homeobox protein DLX-2 (83 aa).

Residues 1-14 are compositionally biased toward polar residues; that stretch reads STATDSSYYTNQQH. Disordered stretches follow at residues 1–27 and 63–83; these read STAT…SPYA and PYGT…LEPE.

This sequence belongs to the distal-less homeobox family. In terms of assembly, interacts (via homeobox DNA-binding domain) with POU4F2; this interaction enhances retinal ganglion cell (RGC) differentiation.

The protein resides in the nucleus. Functionally, acts as a transcriptional activator. Activates transcription of CGA/alpha-GSU, via binding to the downstream activin regulatory element (DARE) in the gene promoter. Plays a role in terminal differentiation of interneurons, such as amacrine and bipolar cells in the developing retina. Likely to play a regulatory role in the development of the ventral forebrain. May play a role in craniofacial patterning and morphogenesis. The sequence is that of Homeobox protein DLX-2 (Dlx2) from Rattus norvegicus (Rat).